Consider the following 597-residue polypeptide: Gigaxonin (597 aa).

The 70-residue stretch at 30–99 (CDAHLVLDGE…IFSGQIRLNE (70 aa)) folds into the BTB domain. Residues 134–236 (CIGIRDFALH…DSSYLREQML (103 aa)) form the BACK domain. Kelch repeat units follow at residues 274 to 326 (CIVT…SAEG), 327 to 374 (FLFV…EIDG), 376 to 421 (LYIL…AMKK), 422 to 468 (KIYA…GVAM), 470 to 522 (LYVF…VYGA), and 528 to 574 (SIYV…AALR).

Interacts with TBCB. Interacts with CUL3. Part of a complex that contains CUL3, RBX1 and GAN. Interacts (via BTB domain) with UBA1. Interacts (via Kelch domains) with MAP1B (via C-terminus) and MAP1S (via C-terminus). Post-translationally, ubiquitinated by E3 ubiquitin ligase complex formed by CUL3 and RBX1 and probably targeted for proteasome-independent degradation. Expressed in brain, heart and muscle.

It localises to the cytoplasm. The protein localises to the cytoskeleton. It functions in the pathway protein modification; protein ubiquitination. Its function is as follows. Probable cytoskeletal component that directly or indirectly plays an important role in neurofilament architecture. May act as a substrate-specific adapter of an E3 ubiquitin-protein ligase complex which mediates the ubiquitination and subsequent proteasomal degradation of target proteins. Controls degradation of TBCB. Controls degradation of MAP1B and MAP1S, and is critical for neuronal maintenance and survival. In Homo sapiens (Human), this protein is Gigaxonin (GAN).